The chain runs to 340 residues: Glycerol-3-phosphate dehydrogenase [NAD(P)+] (340 aa).

Positions 11, 12, 33, and 106 each coordinate NADPH. Residues K106, G137, and S139 each coordinate sn-glycerol 3-phosphate. A141 is an NADPH binding site. Sn-glycerol 3-phosphate contacts are provided by K192, D245, S255, R256, and N257. Catalysis depends on K192, which acts as the Proton acceptor. Position 256 (R256) interacts with NADPH. Residues V280 and E282 each coordinate NADPH.

Belongs to the NAD-dependent glycerol-3-phosphate dehydrogenase family.

It is found in the cytoplasm. It carries out the reaction sn-glycerol 3-phosphate + NAD(+) = dihydroxyacetone phosphate + NADH + H(+). The catalysed reaction is sn-glycerol 3-phosphate + NADP(+) = dihydroxyacetone phosphate + NADPH + H(+). It participates in membrane lipid metabolism; glycerophospholipid metabolism. Catalyzes the reduction of the glycolytic intermediate dihydroxyacetone phosphate (DHAP) to sn-glycerol 3-phosphate (G3P), the key precursor for phospholipid synthesis. In Bacillus cereus (strain G9842), this protein is Glycerol-3-phosphate dehydrogenase [NAD(P)+].